Here is a 980-residue protein sequence, read N- to C-terminus: Probable outer membrane protein PmpH (980 aa).

Positions 1-24 (MPFSLRSTSFCFLACLCSYSYGLA) are cleaved as a signal peptide. One can recognise an Autotransporter domain in the interval 661-980 (GELVPNSLWV…FVSLGLNRIF (320 aa)).

The protein belongs to the PMP outer membrane protein family.

It is found in the secreted. The protein localises to the cell wall. It localises to the cell outer membrane. The chain is Probable outer membrane protein PmpH (pmpH) from Chlamydia muridarum (strain MoPn / Nigg).